The primary structure comprises 1098 residues: Contactin-5 (1098 aa).

The first 23 residues, 1-23 (MASCWRLILFLSVTRWLSDYSEA), serve as a signal peptide directing secretion. Ig-like C2-type domains follow at residues 98-189 (PVFV…ATLQ), 195-281 (NFSG…RVLS), 299-384 (PKIE…GQLQ), 389-473 (PHWV…AELK), 479-568 (PSFE…LSVK), and 570-659 (PTRI…DSVS). An intrachain disulfide couples C122 to C172. N-linked (GlcNAc...) asparagine glycans are attached at residues N137 and N195. Disulfide bonds link C216–C268 and C321–C368. N-linked (GlcNAc...) asparagine glycosylation is found at N396, N448, and N539. 3 cysteine pairs are disulfide-bonded: C410–C457, C502–C550, and C592–C649. Fibronectin type-III domains are found at residues 672-770 (PPGV…TNEA), 775-872 (APSN…SAEG), 877-971 (APTD…TKRH), and 976-1066 (PPGN…SYSG). Residues N778, N815, and N930 are each glycosylated (N-linked (GlcNAc...) asparagine). The disordered stretch occupies residues 956–982 (GYGPPSREASTTTKRHPPREPPGNLRW). Residue N1001 is glycosylated (N-linked (GlcNAc...) asparagine). Residue S1071 is the site of GPI-anchor amidated serine attachment. A propeptide spans 1072–1098 (AQSTLHSLSKWSSVTLLLALMLPSSSW) (removed in mature form).

This sequence belongs to the immunoglobulin superfamily. Contactin family. In terms of assembly, interacts with PTPRG. Expressed in the nervous system. Preferentially expressed in the central auditory pathways.

It localises to the cell membrane. Functionally, contactins mediate cell surface interactions during nervous system development. Has some neurite outgrowth-promoting activity in the cerebral cortical neurons but not in hippocampal neurons. Involved in neuronal activity in the auditory system. The protein is Contactin-5 (Cntn5) of Mus musculus (Mouse).